A 295-amino-acid polypeptide reads, in one-letter code: Protein PAR32 (295 aa).

A2 carries the N-acetylalanine modification. Phosphoserine occurs at positions 36, 39, 47, 123, 138, 141, and 147. Residues 134–153 show a composition bias toward polar residues; sequence SATRSHQSLHATTSSPNNNA. Disordered regions lie at residues 134 to 156 and 217 to 295; these read SATRSHQSLHATTSSPNNNAPIV and TSKK…TMFN. Basic residues predominate over residues 217-227; sequence TSKKPKNKLKG. S246 is subject to Phosphoserine. Over residues 246-256 the composition is skewed to polar residues; it reads SPKSSRNTINH. Positions 265–274 are enriched in basic and acidic residues; the sequence is KFNLKDDNGK. The segment covering 275–284 has biased composition (basic residues); sequence EKKKKKKKKS. Over residues 285 to 295 the composition is skewed to low complexity; the sequence is GFFSSLKTMFN.

In terms of processing, hyperphosphorylated after treatment with rapamycin in a TAP42-dependent manner.

Its subcellular location is the cytoplasm. In terms of biological role, involved in resistance to cisplatin. The sequence is that of Protein PAR32 (PAR32) from Saccharomyces cerevisiae (strain ATCC 204508 / S288c) (Baker's yeast).